Consider the following 252-residue polypeptide: Serine/threonine phosphatase stp (252 aa).

Residues 1–18 are compositionally biased toward basic and acidic residues; that stretch reads MHAEFRTDRGRIRHHNED. A disordered region spans residues 1 to 23; the sequence is MHAEFRTDRGRIRHHNEDNGGVF. Residues 2–242 form the PPM-type phosphatase domain; sequence HAEFRTDRGR…DNITVLLVER (241 aa). Residues Asp36, Gly37, Asp194, and Asp233 each contribute to the Mn(2+) site.

It belongs to the PP2C family. Mn(2+) is required as a cofactor.

It localises to the cytoplasm. The protein resides in the membrane. The enzyme catalyses O-phospho-L-seryl-[protein] + H2O = L-seryl-[protein] + phosphate. It catalyses the reaction O-phospho-L-threonyl-[protein] + H2O = L-threonyl-[protein] + phosphate. Its function is as follows. Protein phosphatase that dephosphorylates EF-Tu. The sequence is that of Serine/threonine phosphatase stp (stp) from Listeria monocytogenes serotype 4b (strain F2365).